The chain runs to 360 residues: Photosystem II protein D1 (360 aa).

3 helical membrane-spanning segments follow: residues 29-46 (YIGWFGVLMIPTLLTATS), 118-133 (HFLLGVSCYIGREWEL), and 142-156 (WISVAFTAPVAAAAA). His-118 contacts chlorophyll a. Tyr-126 contacts pheophytin a. [CaMn4O5] cluster-binding residues include Asp-170 and Glu-189. The helical transmembrane segment at 197-218 (FHQLGVAGVFGGSLFSAMHGSL) threads the bilayer. His-198 contributes to the chlorophyll a binding site. A quinone is bound by residues His-215 and 264 to 265 (SF). Fe cation is bound at residue His-215. His-272 lines the Fe cation pocket. Residues 274 to 288 (FLGLWPVVGIWFTAM) traverse the membrane as a helical segment. Residues His-332, Glu-333, Asp-342, and Ala-344 each coordinate [CaMn4O5] cluster. Positions 345-360 (SSNSLPVSLVAPSVNG) are excised as a propeptide.

Belongs to the reaction center PufL/M/PsbA/D family. In terms of assembly, PSII is composed of 1 copy each of membrane proteins PsbA, PsbB, PsbC, PsbD, PsbE, PsbF, PsbH, PsbI, PsbJ, PsbK, PsbL, PsbM, PsbT, PsbX, PsbY, PsbZ, Psb30/Ycf12, at least 3 peripheral proteins of the oxygen-evolving complex and a large number of cofactors. It forms dimeric complexes. The D1/D2 heterodimer binds P680, chlorophylls that are the primary electron donor of PSII, and subsequent electron acceptors. It shares a non-heme iron and each subunit binds pheophytin, quinone, additional chlorophylls, carotenoids and lipids. D1 provides most of the ligands for the Mn4-Ca-O5 cluster of the oxygen-evolving complex (OEC). There is also a Cl(-1) ion associated with D1 and D2, which is required for oxygen evolution. The PSII complex binds additional chlorophylls, carotenoids and specific lipids. is required as a cofactor. Post-translationally, tyr-161 forms a radical intermediate that is referred to as redox-active TyrZ, YZ or Y-Z. In terms of processing, C-terminally processed by CTPA; processing is essential to allow assembly of the oxygen-evolving complex and thus photosynthetic growth.

It is found in the plastid. Its subcellular location is the chloroplast thylakoid membrane. It carries out the reaction 2 a plastoquinone + 4 hnu + 2 H2O = 2 a plastoquinol + O2. Its function is as follows. Photosystem II (PSII) is a light-driven water:plastoquinone oxidoreductase that uses light energy to abstract electrons from H(2)O, generating O(2) and a proton gradient subsequently used for ATP formation. It consists of a core antenna complex that captures photons, and an electron transfer chain that converts photonic excitation into a charge separation. The D1/D2 (PsbA/PsbD) reaction center heterodimer binds P680, the primary electron donor of PSII as well as several subsequent electron acceptors. The chain is Photosystem II protein D1 from Gracilaria tenuistipitata var. liui (Red alga).